A 196-amino-acid polypeptide reads, in one-letter code: GTP cyclohydrolase 1 (196 aa).

Cys-86, His-89, and Cys-158 together coordinate Zn(2+).

Belongs to the GTP cyclohydrolase I family. As to quaternary structure, toroid-shaped homodecamer, composed of two pentamers of five dimers.

The enzyme catalyses GTP + H2O = 7,8-dihydroneopterin 3'-triphosphate + formate + H(+). It functions in the pathway cofactor biosynthesis; 7,8-dihydroneopterin triphosphate biosynthesis; 7,8-dihydroneopterin triphosphate from GTP: step 1/1. The protein is GTP cyclohydrolase 1 of Clostridium botulinum (strain ATCC 19397 / Type A).